A 1017-amino-acid chain; its full sequence is EMILIN-1 (1017 aa).

The first 21 residues, 1 to 21 (MAPRALWSCYLCCLLTIATEA), serve as a signal peptide directing secretion. Residues 56-133 (HRNWCAYVVT…QGYGGDDCGE (78 aa)) form the EMI domain. Cystine bridges form between Cys60/Cys123, Cys87/Cys94, and Cys122/Cys131. Disordered stretches follow at residues 134 to 180 (GPAS…SEKV) and 259 to 289 (ELGHLNNHHNGGPGGGGRASGPVPVPSGPSE). Over residues 154–167 (RPNLSGSSAGSHLS) the composition is skewed to low complexity. N-linked (GlcNAc...) asparagine glycosylation occurs at Asn156. Coiled coils occupy residues 171–211 (GEGP…LAED), 237–266 (ETLSEIQQQLQLLDNRVSTHDQELGHLNNH), and 310–374 (LDGF…DVVT). The disordered stretch occupies residues 383–403 (RRGSELGGAAGQGGHPPGYTS). Gly residues predominate over residues 387-398 (ELGGAAGQGGHP). Residues Asn416, Asn456, Asn562, and Asn659 are each glycosylated (N-linked (GlcNAc...) asparagine). Residues 519–573 (LHEAEAAGEAQQAVLEGLQGLLSRLRERMDAQEETAAEILLRLNLTAAQLSQLEG) are a coiled coil. A coiled-coil region spans residues 676–697 (LADLGATKDSIISEINRLQQEA). Residues Asn767 and Asn795 are each glycosylated (N-linked (GlcNAc...) asparagine). Positions 789–809 (RRLGALNNSLLLLEDRLQQLS) form a coiled coil. A compositionally biased stretch (low complexity) spans 811-820 (KDFTGPSGKA). The tract at residues 811–866 (KDFTGPSGKAGPPGPPGLQGPSGPAGPPGPPGKDGQQGAIGPPGPQGEQGAEGAPA) is disordered. Residues 815–865 (GPSGKAGPPGPPGLQGPSGPAGPPGPPGKDGQQGAIGPPGPQGEQGAEGAP) form the Collagen-like domain. Residues 822-841 (PPGPPGLQGPSGPAGPPGPP) are compositionally biased toward pro residues. Residues 843–866 (KDGQQGAIGPPGPQGEQGAEGAPA) are compositionally biased toward low complexity. Residues 867 to 1014 (APVPRVAFSA…GALLYEDTEL (148 aa)) form the C1q domain.

In terms of assembly, homotrimer associated through a moderately stable interaction of the C-terminal globular C1q domains, allowing the nucleation of the triple helix and then a further quaternary assembly to higher-order polymers via intermolecular disulfide bonds. Interacts with EMILIN2. Interacts with EFEMP2; this interaction promotes the incorporation of EFEMP2 into the extracellular matrix.

The protein resides in the secreted. Its subcellular location is the extracellular space. It is found in the extracellular matrix. In terms of biological role, involved in elastic and collagen fibers formation. It is required for EFEMP2 deposition into the extracellular matrix, and collagen network assembly and cross-linking via protein-lysine 6-oxidase/LOX activity. May be responsible for anchoring smooth muscle cells to elastic fibers, and may be involved the processes that regulate vessel assembly. Has cell adhesive capacity. May have a function in placenta formation and initial organogenesis and a later role in interstitial connective tissue. In Mus musculus (Mouse), this protein is EMILIN-1 (Emilin1).